Consider the following 482-residue polypeptide: Transcription termination/antitermination protein NusA (482 aa).

Positions 133–197 (NKVVIGYVQQ…NGIEVILSRT (65 aa)) constitute an S1 motif domain. The 147-residue stretch at 300-446 (LHKALVVVSD…NDNDESMEKV (147 aa)) folds into the KH domain.

It belongs to the NusA family. As to quaternary structure, monomer. Binds directly to the core enzyme of the DNA-dependent RNA polymerase and to nascent RNA.

It is found in the cytoplasm. Functionally, participates in both transcription termination and antitermination. The sequence is that of Transcription termination/antitermination protein NusA from Borreliella burgdorferi (strain ATCC 35210 / DSM 4680 / CIP 102532 / B31) (Borrelia burgdorferi).